The sequence spans 313 residues: tRNA uridine(34) hydroxylase (313 aa).

In terms of domain architecture, Rhodanese spans 124–218; sequence SDPEVLLIDT…YLEEVPQEET (95 aa). C178 (cysteine persulfide intermediate) is an active-site residue.

Belongs to the TrhO family.

It catalyses the reaction uridine(34) in tRNA + AH2 + O2 = 5-hydroxyuridine(34) in tRNA + A + H2O. In terms of biological role, catalyzes oxygen-dependent 5-hydroxyuridine (ho5U) modification at position 34 in tRNAs. This is tRNA uridine(34) hydroxylase from Pseudomonas fluorescens (strain Pf0-1).